The primary structure comprises 168 residues: Putative B3 domain-containing protein Os10g0158600 (168 aa).

Residues 4–97 (VVFASARLNA…KARVMLLNRQ (94 aa)) constitute a DNA-binding region (TF-B3). The segment at 105 to 151 (KTPSTTSSDKNRSLSPSDQLTRASTSAHPSTSKSIPPLRNGTGSTKR) is disordered. Residues 106–138 (TPSTTSSDKNRSLSPSDQLTRASTSAHPSTSKS) are compositionally biased toward polar residues.

The protein localises to the nucleus. This chain is Putative B3 domain-containing protein Os10g0158600, found in Oryza sativa subsp. japonica (Rice).